We begin with the raw amino-acid sequence, 505 residues long: MEWEWSYVFFSAIIILPAFILFFSQKNTTKSSYKFPPGPPGLPIFGNMFELGTEPYKKMAVLRQKYGPVLWLKLGSTYTMVVQTAQASEELFKNHDISFANRVIPDVNQAHSYYQGSLAIAPYGPFWRFQRRICTIEMFVHKKISETEPVRRKCVDNMLKWIEKEANSAEKGSGIEVTRFVFLASFNMLGNLILSKDLADLESEEASEFFIAMKRINEWSGIANVSDIFPFLKKFDLQSLRKKMARDMGKAVEIMSMFLKEREEERKKGTEKGKDFLDVLLEFQGTGKDEPAKLSEHEIKIFVLEMFLAGTETTSSSVEWALTELLRHPEAMAKVKTEISQAIEPNRKFEDSDIENLPYMQAVLKESLRLHPPLPFLIPRETIQDTKFMGYDVPKDTQVLVNAWAIGRDPECWDDPMSFKPERFLGSKIDVKGQHYGLIPFGAGRRMCVGLPLGHRMMHFALGSLLREFEWELPDGVSPKSINMDGSMGVTARKRDSLKVIPKKA.

A heme-binding site is contributed by cysteine 448.

It belongs to the cytochrome P450 family. The cofactor is heme.

This is Cytochrome P450 76A2 (CYP76A2) from Solanum melongena (Eggplant).